A 243-amino-acid polypeptide reads, in one-letter code: Segregation and condensation protein A (243 aa).

The protein belongs to the ScpA family. As to quaternary structure, component of a cohesin-like complex composed of ScpA, ScpB and the Smc homodimer, in which ScpA and ScpB bind to the head domain of Smc. The presence of the three proteins is required for the association of the complex with DNA.

The protein resides in the cytoplasm. Participates in chromosomal partition during cell division. May act via the formation of a condensin-like complex containing Smc and ScpB that pull DNA away from mid-cell into both cell halves. This Halothermothrix orenii (strain H 168 / OCM 544 / DSM 9562) protein is Segregation and condensation protein A.